The chain runs to 214 residues: Thymidylate kinase (214 aa).

Residue 13 to 20 participates in ATP binding; sequence GPDACGKS.

Belongs to the thymidylate kinase family.

It carries out the reaction dTMP + ATP = dTDP + ADP. Phosphorylation of dTMP to form dTDP in both de novo and salvage pathways of dTTP synthesis. The protein is Thymidylate kinase of Malacoplasma penetrans (strain HF-2) (Mycoplasma penetrans).